The sequence spans 570 residues: Formate--tetrahydrofolate ligase (570 aa).

Thr-65–Thr-72 contacts ATP.

This sequence belongs to the formate--tetrahydrofolate ligase family.

The enzyme catalyses (6S)-5,6,7,8-tetrahydrofolate + formate + ATP = (6R)-10-formyltetrahydrofolate + ADP + phosphate. Its pathway is one-carbon metabolism; tetrahydrofolate interconversion. The chain is Formate--tetrahydrofolate ligase from Shewanella halifaxensis (strain HAW-EB4).